The following is a 474-amino-acid chain: Cysteine--tRNA ligase (474 aa).

Cys-30 contacts Zn(2+). The 'HIGH' region signature appears at 32–42; that stretch reads PTVYNYAHIGN. Positions 215, 240, and 244 each coordinate Zn(2+). Positions 272-276 match the 'KMSKS' region motif; it reads KMSKS. Lys-275 is an ATP binding site.

Belongs to the class-I aminoacyl-tRNA synthetase family. In terms of assembly, monomer. Requires Zn(2+) as cofactor.

It localises to the cytoplasm. It carries out the reaction tRNA(Cys) + L-cysteine + ATP = L-cysteinyl-tRNA(Cys) + AMP + diphosphate. The polypeptide is Cysteine--tRNA ligase (Brachyspira hyodysenteriae (strain ATCC 49526 / WA1)).